A 682-amino-acid polypeptide reads, in one-letter code: Potassium-transporting ATPase ATP-binding subunit (682 aa).

Helical transmembrane passes span 34–54, 62–82, 219–239, and 254–274; these read PVMFIVWIGSLLTTCISIAMA, ALFSAAISGWLWVTVLFANFA, IALTILLIALTIVFLLATATL, and VLVALLVCLIPTTIGGLLSAI. Catalysis depends on Asp307, which acts as the 4-aspartylphosphate intermediate. ATP contacts are provided by residues Asp344, Glu348, 377 to 384, and Lys395; that span reads FTAQSRMS. Residues Asp518 and Asp522 each coordinate Mg(2+). A run of 3 helical transmembrane segments spans residues 588–608, 616–636, and 656–676; these read FAIIPAAFAATYPQLNALNIM, AILSAVIFNALIIVFLIPLAL, and IYGLGGLLVPFIGIKVIDLLL.

Belongs to the cation transport ATPase (P-type) (TC 3.A.3) family. Type IA subfamily. In terms of assembly, the system is composed of three essential subunits: KdpA, KdpB and KdpC.

The protein resides in the cell inner membrane. It carries out the reaction K(+)(out) + ATP + H2O = K(+)(in) + ADP + phosphate + H(+). In terms of biological role, part of the high-affinity ATP-driven potassium transport (or Kdp) system, which catalyzes the hydrolysis of ATP coupled with the electrogenic transport of potassium into the cytoplasm. This subunit is responsible for energy coupling to the transport system and for the release of the potassium ions to the cytoplasm. This is Potassium-transporting ATPase ATP-binding subunit from Escherichia coli O6:K15:H31 (strain 536 / UPEC).